An 82-amino-acid chain; its full sequence is Putative antimicrobial peptide 7848 (82 aa).

A signal peptide spans 1–17 (MNENLWAAPAPKKLSKH). The segment at 16-60 (KHFFGRGGPLGKETGPNLFPKKPGAGKGLGFPPTKKPRGQPRVLK) is disordered. Residues 38–82 (PGAGKGLGFPPTKKPRGQPRVLKKPKWNSEGLIGILHRGSDGVQF) constitute a propeptide that is removed on maturation. The span at 50–60 (KKPRGQPRVLK) shows a compositional bias: basic residues.

The protein belongs to the non-disulfide-bridged peptide (NDBP) superfamily. Short antimicrobial peptide (group 4) family. Expressed by the venom gland.

Its subcellular location is the secreted. This is Putative antimicrobial peptide 7848 from Urodacus yaschenkoi (Inland robust scorpion).